Reading from the N-terminus, the 337-residue chain is Protein LEG1 homolog (337 aa).

Residues 1–20 (MAVLASWVWVLAGCFCAAVA) form the signal peptide. The N-linked (GlcNAc...) asparagine glycan is linked to Asn171.

The protein belongs to the LEG1 family.

Its subcellular location is the secreted. May be involved in early liver development. This is Protein LEG1 homolog from Mus musculus (Mouse).